The primary structure comprises 533 residues: NAD(P)H-quinone oxidoreductase chain 4 1 (533 aa).

The next 14 helical transmembrane spans lie at 6–26, 37–57, 87–107, 113–133, 137–157, 169–189, 209–229, 243–263, 277–297, 311–331, 332–352, 376–396, 417–437, and 461–481; these read FPWL…IPLI, YSLF…WQHF, LSMP…LASW, PKLF…VFTA, MLFF…ISIW, FILY…ALAF, WLEL…LSIF, NAPG…YALI, FAPV…LNAF, ISHM…GLNG, ALLQ…LAGV, FALF…SGFV, VTIL…LSML, and LFVA…PKLT.

Belongs to the complex I subunit 4 family.

The protein resides in the cellular thylakoid membrane. It carries out the reaction a plastoquinone + NADH + (n+1) H(+)(in) = a plastoquinol + NAD(+) + n H(+)(out). It catalyses the reaction a plastoquinone + NADPH + (n+1) H(+)(in) = a plastoquinol + NADP(+) + n H(+)(out). In terms of biological role, NDH-1 shuttles electrons from NAD(P)H, via FMN and iron-sulfur (Fe-S) centers, to quinones in the respiratory chain. The immediate electron acceptor for the enzyme in this species is believed to be plastoquinone. Couples the redox reaction to proton translocation (for every two electrons transferred, four hydrogen ions are translocated across the cytoplasmic membrane), and thus conserves the redox energy in a proton gradient. This chain is NAD(P)H-quinone oxidoreductase chain 4 1, found in Synechococcus elongatus (strain ATCC 33912 / PCC 7942 / FACHB-805) (Anacystis nidulans R2).